Here is a 1611-residue protein sequence, read N- to C-terminus: SH3 domain-containing protein C23A1.17 (1611 aa).

An SH3 domain is found at 3–67 (SFPTRVVALY…PKDFTEPAED (65 aa)). Disordered regions lie at residues 275 to 648 (THPA…PTSL), 662 to 741 (IDPP…PPGL), 762 to 851 (AVPR…NSLN), and 886 to 1365 (TPST…FSAK). Polar residues predominate over residues 278 to 296 (AASSTMATESSHQSPSADS). A compositionally biased stretch (basic and acidic residues) spans 300–312 (ELSKSQRVAKDDD). Positions 316–330 (VSNTANSDEPASSSK) are enriched in polar residues. Acidic residues-rich tracts occupy residues 361–373 (SEQEEDEYDDAES) and 387–420 (SEPEDQDEPSEKDDENKDVEEEQEQEQEEEQIDP). A compositionally biased stretch (basic and acidic residues) spans 421–433 (EEAKRIALRERMA). The segment covering 472–494 (STTNDSSPPKDSSSTSTQPTEQS) has biased composition (low complexity). The segment covering 576–586 (TQETSEQQVHK) has biased composition (polar residues). Positions 605–619 (FDKETLASNEAHEAV) are enriched in basic and acidic residues. The span at 637 to 648 (SSSVVTPSPTSL) shows a compositional bias: low complexity. Polar residues-rich tracts occupy residues 799–808 (SRPSTGSQLR), 886–902 (TPSTATFQGHPTISNVA), and 923–940 (ATHQSSTGLTQEITQLGS). 3 stretches are compositionally biased toward pro residues: residues 963-974 (PAAPPSIPPPLP), 1022-1053 (PPVPLPSADAPPIPVPSTAPPVPIPTSTPPVP), and 1076-1241 (IPAP…PVPA). Residues 1242-1278 (PSSEAPSVSTPRSSVPSPHSNASPSPTSSSMASAAPA) are compositionally biased toward low complexity. Phosphoserine is present on residues S1258, S1261, and S1266. A compositionally biased stretch (basic residues) spans 1300–1312 (KSSKSGEHHHHHN). Residues 1317-1327 (DSSSTRTSLAH) show a composition bias toward polar residues. Over residues 1340–1350 (RSSSRASKKPS) the composition is skewed to low complexity. Residues 1351–1362 (IVSTTGPFNESF) are compositionally biased toward polar residues. Residue S1379 is modified to Phosphoserine. Phosphothreonine is present on T1380.

It is found in the cytoplasm. The polypeptide is SH3 domain-containing protein C23A1.17 (Schizosaccharomyces pombe (strain 972 / ATCC 24843) (Fission yeast)).